The sequence spans 625 residues: MALPTAQPLLGSCGSPICSRSFLLLLLSLGWLPLLQTQTTRTSQEAALLHAVTGTVDFASLPTGLFLGLMCDEVSGLSMGHAKELAMAVRQKNIVLQVHQLRCLARRLPKHLTNEELDALPLDLLLFLNPAMFPGQQACAHFFSLISKANVNVLPRRSLERQRLLTGALKCQGVYGFQVSETDARALGGLACDLPGEFVAKSSEVLLPWLARCGGPLDQGQAKAVREVLRSGRAPYGPPSTWSVSTLDALQGLLVVLDESIVHSIPKDVITEWLQGISREPSRLGSKWTVTHPRFRRDTEQKACPPGKEPNVVDENLIFYQNWELEACVDGTLLAGQMDLVNEIPFTYEQLSIFKHKLDKTYPQGYPESLIKQLGHFFRYVSPEDIRQWNVTSPDTVNTLLKVSKGQKMDAQVIALVACYLRGGGKLDEDIVKALDNIPLSYLCDFSPQDLHAIPSSVMWLVGLHDLDKCSQRHLGILYQKACSAFQNVSGLEYFEKIRTFLGGASREDLRALSQHNVSMDIATFKKLQVDALVGLSVAEVQKLLGPHIGDLKTEEDKSPVRDWLFRQQQKDLDSLGLGLQGGIPNGYLILDFNVREAFSSGAPLLGPGFVFAWIPALLSALRLS.

The signal sequence occupies residues 1–35 (MALPTAQPLLGSCGSPICSRSFLLLLLSLGWLPLL). Serine 202 is subject to Phosphoserine. A disulfide bridge links cysteine 304 with cysteine 328. N-linked (GlcNAc...) asparagine glycosylation is found at asparagine 390, asparagine 488, and asparagine 517. The GPI-anchor amidated serine moiety is linked to residue serine 600. Residues 601–625 (SGAPLLGPGFVFAWIPALLSALRLS) constitute a propeptide, removed in mature form.

The protein belongs to the mesothelin family. As to quaternary structure, interacts with MUC16. Proteolytically cleaved by a furin-like convertase to generate megakaryocyte-potentiating factor (MPF), and the cleaved form of mesothelin. In terms of tissue distribution, specifically expressed in lung. Overexpressed in hereditary renal carcinoma developed by Eker rats.

The protein resides in the cell membrane. It localises to the golgi apparatus. Its subcellular location is the secreted. Functionally, membrane-anchored forms may play a role in cellular adhesion. Megakaryocyte-potentiating factor (MPF) may potentiate megakaryocyte colony formation. This Rattus norvegicus (Rat) protein is Mesothelin (Msln).